Reading from the N-terminus, the 129-residue chain is Small ribosomal subunit protein uS9 (129 aa).

It belongs to the universal ribosomal protein uS9 family.

The protein is Small ribosomal subunit protein uS9 of Helicobacter pylori (strain P12).